A 687-amino-acid chain; its full sequence is Outer dynein arm-docking complex subunit 1 (687 aa).

Coiled coils occupy residues 100–193 (QVRV…YLNV), 222–267 (REEA…LKLK), and 341–421 (INEQ…LFTR). The interval 126 to 147 (SRNSAHSKNARSPGCVQHDKVK) is disordered. Disordered stretches follow at residues 363-388 (VSGRRSEEDRRAQQEQQRAELQQRVD), 487-511 (FPKKVAPPQPPDNLEDPPGFEAKDD), and 540-687 (ESTP…QSNY). Residues 366 to 388 (RRSEEDRRAQQEQQRAELQQRVD) are compositionally biased toward basic and acidic residues. The segment covering 544-556 (SMTSSTQKVSSSS) has biased composition (low complexity). Composition is skewed to polar residues over residues 557–611 (RLVT…SSRG) and 620–629 (RSPNSSSYLG). Residues 660–680 (SPGPASSPGPASSTGQASSTS) are compositionally biased toward low complexity.

The protein belongs to the ODA1/DCC2 family. As to quaternary structure, component of the outer dynein arm-docking complex along with ODAD2, ODAD3, ODAD4 and CLXN. Interacts with ODAD3. Interacts with ODAD4; this interaction may facilitate the recruitment and/or attachment of outer dynein arm docking complex proteins, including ODAD1, ODAD3, and ODAD4 to ciliary axonemes. Interacts with DNAH9. Interacts with MNS1. Interacts with PIERCE1 and PIERCE2; the interactions link the outer dynein arms docking complex (ODA-DC) to the internal microtubule inner proteins (MIP) in cilium axoneme. In terms of tissue distribution, expressed in trachea multiciliated cells.

The protein resides in the cytoplasm. It is found in the cytoskeleton. The protein localises to the cilium axoneme. Its function is as follows. Component of the outer dynein arm-docking complex (ODA-DC) that mediates outer dynein arms (ODA) binding onto the doublet microtubule. Involved in mediating assembly of both ODAs and their axonemal docking complex onto ciliary microtubules. The protein is Outer dynein arm-docking complex subunit 1 (ODAD1) of Bos taurus (Bovine).